The sequence spans 383 residues: 8-amino-7-oxononanoate synthase (383 aa).

Arg-21 contacts substrate. Gly-108–Tyr-109 provides a ligand contact to pyridoxal 5'-phosphate. His-133 is a binding site for substrate. 3 residues coordinate pyridoxal 5'-phosphate: Ser-179, His-207, and Thr-233. Lys-236 carries the N6-(pyridoxal phosphate)lysine modification. Thr-350 provides a ligand contact to substrate.

This sequence belongs to the class-II pyridoxal-phosphate-dependent aminotransferase family. BioF subfamily. Homodimer. Requires pyridoxal 5'-phosphate as cofactor.

It carries out the reaction 6-carboxyhexanoyl-[ACP] + L-alanine + H(+) = (8S)-8-amino-7-oxononanoate + holo-[ACP] + CO2. The protein operates within cofactor biosynthesis; biotin biosynthesis. In terms of biological role, catalyzes the decarboxylative condensation of pimeloyl-[acyl-carrier protein] and L-alanine to produce 8-amino-7-oxononanoate (AON), [acyl-carrier protein], and carbon dioxide. This is 8-amino-7-oxononanoate synthase from Serratia proteamaculans (strain 568).